Consider the following 271-residue polypeptide: Transmembrane protein 150A (271 aa).

Residues 1 to 2 (MT) lie on the Cytoplasmic side of the membrane. The helical transmembrane segment at 3–23 (AWILLPVSLSAFSITGIWTVY) threads the bilayer. The Extracellular portion of the chain corresponds to 24–75 (AMAVMNHHVCPVENWSYNESCPPDPAEQGGPKTCCTLDDVPLISKCGSYPPE). N-linked (GlcNAc...) asparagine glycans are attached at residues Asn-37 and Asn-41. The chain crosses the membrane as a helical span at residues 76–96 (SCLFSLIGNMGAFMVALICLL). Residues 97–108 (RYGQLLEQSRHS) lie on the Cytoplasmic side of the membrane. The helical transmembrane segment at 109 to 129 (WVNTTALITGCTNAAGLLVVG) threads the bilayer. Residues 130–140 (NFQVDHARSLH) lie on the Extracellular side of the membrane. A helical transmembrane segment spans residues 141-161 (YVGAGVAFPAGLLFVCLHCAL). Topologically, residues 162–178 (SYQGATAPLDLAVAYLR) are cytoplasmic. The chain crosses the membrane as a helical span at residues 179–199 (SVLAVIAFITLVLSGVFFVHE). The Extracellular portion of the chain corresponds to 200 to 211 (SSQLQHGAALCE). The helical transmembrane segment at 212-232 (WVCVIDILIFYGTFSYEFGAV) threads the bilayer. The Cytoplasmic segment spans residues 233-271 (SSDTLVAALQPTPGRACKSSGSSSTSTHLNCAPESIAMI).

It belongs to the DRAM/TMEM150 family. In terms of assembly, interacts (via C-terminal cytoplasmic tail) with PI4KA.

Its subcellular location is the cell membrane. Regulates localization of phosphatidylinositol 4-kinase (PI4K) to the plasma membrane, possibly by reducing the association of TTC7 (TTC7A or TTC7B) with the PI4K complex. Acts as a regulator of phosphatidylinositol 4-phosphate (PtdIns(4)P) synthesis. May also play a role in fasting-induced catabolism. The polypeptide is Transmembrane protein 150A (TMEM150A) (Homo sapiens (Human)).